A 1279-amino-acid chain; its full sequence is ATP-dependent helicase/nuclease subunit A (1279 aa).

The UvrD-like helicase ATP-binding domain maps to 4–499; the sequence is TKWTDEQRQA…VKLFKNFRSR (496 aa). Residue 25 to 32 coordinates ATP; that stretch reads AGAGAGKT. The 328-residue stretch at 526–853 folds into the UvrD-like helicase C-terminal domain; that stretch reads EEALKVGASY…RIMSIHKSKG (328 aa).

This sequence belongs to the helicase family. AddA subfamily. Heterodimer of AddA and AddB/RexB. Mg(2+) is required as a cofactor.

It catalyses the reaction Couples ATP hydrolysis with the unwinding of duplex DNA by translocating in the 3'-5' direction.. The enzyme catalyses ATP + H2O = ADP + phosphate + H(+). Functionally, the heterodimer acts as both an ATP-dependent DNA helicase and an ATP-dependent, dual-direction single-stranded exonuclease. Recognizes the chi site generating a DNA molecule suitable for the initiation of homologous recombination. The AddA nuclease domain is required for chi fragment generation; this subunit has the helicase and 3' -&gt; 5' nuclease activities. The sequence is that of ATP-dependent helicase/nuclease subunit A from Clostridium botulinum (strain Loch Maree / Type A3).